A 178-amino-acid chain; its full sequence is Alkyl hydroperoxide reductase AhpD (178 aa).

Residue cysteine 130 is the Proton donor of the active site. Cysteines 130 and 133 form a disulfide. The Cysteine sulfenic acid (-SOH) intermediate role is filled by cysteine 133.

Belongs to the AhpD family. Homotrimer.

It catalyses the reaction N(6)-[(R)-dihydrolipoyl]-L-lysyl-[lipoyl-carrier protein] + a hydroperoxide = N(6)-[(R)-lipoyl]-L-lysyl-[lipoyl-carrier protein] + an alcohol + H2O. In terms of biological role, antioxidant protein with alkyl hydroperoxidase activity. Required for the reduction of the AhpC active site cysteine residues and for the regeneration of the AhpC enzyme activity. This is Alkyl hydroperoxide reductase AhpD from Mycobacterium ulcerans (strain Agy99).